The following is a 443-amino-acid chain: Probable 26S proteasome regulatory subunit 4 (443 aa).

The tract at residues 1–53 (MGQQQSGFGGRGNDRGAGDGEKKEKKKYEAPIPSRIGKKKKGSKGPDAASKLP) is disordered. Basic and acidic residues predominate over residues 12 to 29 (GNDRGAGDGEKKEKKKYE). Position 229–236 (229–236 (GCPGTGKT)) interacts with ATP.

Belongs to the AAA ATPase family.

The protein localises to the cytoplasm. It localises to the nucleus. Functionally, the 26S proteasome is involved in the ATP-dependent degradation of ubiquitinated proteins. The regulatory (or ATPase) complex confers ATP dependency and substrate specificity to the 26S complex. May play a role in the degradation of microtubule severing protein mei-1. This chain is Probable 26S proteasome regulatory subunit 4 (rpt-2), found in Caenorhabditis elegans.